The chain runs to 729 residues: Fatty acid oxidation complex subunit alpha (729 aa).

The interval 1–189 is enoyl-CoA hydratase/isomerase; it reads MLYKGDTLYL…KIGLVDGVVK (189 aa). A substrate-binding site is contributed by Asp296. The tract at residues 311-729 is 3-hydroxyacyl-CoA dehydrogenase; the sequence is ETPKQAAVLG…ARPVGDLKTA (419 aa). Residues Met324, Asp343, 400–402, Lys407, and Ser429 each bind NAD(+); that span reads VVE. Catalysis depends on His450, which acts as the For 3-hydroxyacyl-CoA dehydrogenase activity. Asn453 provides a ligand contact to NAD(+). Asn500 and Tyr660 together coordinate substrate. The disordered stretch occupies residues 708–729; the sequence is RHNEPYYPPVEPARPVGDLKTA.

In the N-terminal section; belongs to the enoyl-CoA hydratase/isomerase family. The protein in the C-terminal section; belongs to the 3-hydroxyacyl-CoA dehydrogenase family. As to quaternary structure, heterotetramer of two alpha chains (FadB) and two beta chains (FadA).

The enzyme catalyses a (3S)-3-hydroxyacyl-CoA + NAD(+) = a 3-oxoacyl-CoA + NADH + H(+). The catalysed reaction is a (3S)-3-hydroxyacyl-CoA = a (2E)-enoyl-CoA + H2O. It carries out the reaction a 4-saturated-(3S)-3-hydroxyacyl-CoA = a (3E)-enoyl-CoA + H2O. It catalyses the reaction (3S)-3-hydroxybutanoyl-CoA = (3R)-3-hydroxybutanoyl-CoA. The enzyme catalyses a (3Z)-enoyl-CoA = a 4-saturated (2E)-enoyl-CoA. The catalysed reaction is a (3E)-enoyl-CoA = a 4-saturated (2E)-enoyl-CoA. Its pathway is lipid metabolism; fatty acid beta-oxidation. Involved in the aerobic and anaerobic degradation of long-chain fatty acids via beta-oxidation cycle. Catalyzes the formation of 3-oxoacyl-CoA from enoyl-CoA via L-3-hydroxyacyl-CoA. It can also use D-3-hydroxyacyl-CoA and cis-3-enoyl-CoA as substrate. The chain is Fatty acid oxidation complex subunit alpha from Escherichia coli O139:H28 (strain E24377A / ETEC).